The chain runs to 493 residues: Lysine--tRNA ligase (493 aa).

The Mg(2+) site is built by E400 and E407.

The protein belongs to the class-II aminoacyl-tRNA synthetase family. As to quaternary structure, homodimer. Requires Mg(2+) as cofactor.

It is found in the cytoplasm. It catalyses the reaction tRNA(Lys) + L-lysine + ATP = L-lysyl-tRNA(Lys) + AMP + diphosphate. The polypeptide is Lysine--tRNA ligase (Syntrophomonas wolfei subsp. wolfei (strain DSM 2245B / Goettingen)).